We begin with the raw amino-acid sequence, 270 residues long: NADPH-dependent 7-cyano-7-deazaguanine reductase (270 aa).

79-81 provides a ligand contact to substrate; sequence IES. 81-82 contacts NADPH; that stretch reads SK. C177 acts as the Thioimide intermediate in catalysis. D184 serves as the catalytic Proton donor. Residue 216–217 coordinates substrate; the sequence is HE. An NADPH-binding site is contributed by 245–246; sequence RG.

Belongs to the GTP cyclohydrolase I family. QueF type 2 subfamily. Homodimer.

It localises to the cytoplasm. It carries out the reaction 7-aminomethyl-7-carbaguanine + 2 NADP(+) = 7-cyano-7-deazaguanine + 2 NADPH + 3 H(+). It participates in tRNA modification; tRNA-queuosine biosynthesis. In terms of biological role, catalyzes the NADPH-dependent reduction of 7-cyano-7-deazaguanine (preQ0) to 7-aminomethyl-7-deazaguanine (preQ1). This chain is NADPH-dependent 7-cyano-7-deazaguanine reductase, found in Acinetobacter baumannii (strain AB307-0294).